The sequence spans 429 residues: Glutamate-1-semialdehyde 2,1-aminomutase (429 aa).

Residue lysine 267 is modified to N6-(pyridoxal phosphate)lysine.

It belongs to the class-III pyridoxal-phosphate-dependent aminotransferase family. HemL subfamily. In terms of assembly, homodimer. Pyridoxal 5'-phosphate serves as cofactor.

The protein localises to the cytoplasm. It carries out the reaction (S)-4-amino-5-oxopentanoate = 5-aminolevulinate. The protein operates within porphyrin-containing compound metabolism; protoporphyrin-IX biosynthesis; 5-aminolevulinate from L-glutamyl-tRNA(Glu): step 2/2. The protein is Glutamate-1-semialdehyde 2,1-aminomutase of Xanthomonas campestris pv. campestris (strain 8004).